Consider the following 388-residue polypeptide: Xylose isomerase (388 aa).

Residues His54 and Asp57 contribute to the active site. Residues Glu181, Glu217, His220, Asp245, Asp255, Asp257, and Asp287 each coordinate Mg(2+).

This sequence belongs to the xylose isomerase family. Homotetramer. The cofactor is Mg(2+).

It is found in the cytoplasm. It catalyses the reaction alpha-D-xylose = alpha-D-xylulofuranose. Involved in D-xylose catabolism. This is Xylose isomerase (xylA) from Streptomyces rubiginosus.